Reading from the N-terminus, the 96-residue chain is Transcription and mRNA export factor ENY2 (96 aa).

Belongs to the ENY2 family. As to quaternary structure, component of the nuclear pore complex (NPC)-associated TREX-2 complex (transcription and export complex 2). Component of the SAGA transcription coactivator-HAT complex. Within the SAGA complex, participates in a subcomplex of SAGA called the DUB module (deubiquitination module).

It is found in the nucleus. It localises to the nucleoplasm. Its function is as follows. Involved in mRNA export coupled transcription activation by association with both the TREX-2 and the SAGA complexes. The transcription regulatory histone acetylation (HAT) complex SAGA is a multiprotein complex that activates transcription by remodeling chromatin and mediating histone acetylation and deubiquitination. Within the SAGA complex, participates in a subcomplex that specifically deubiquitinates histones. The SAGA complex is recruited to specific gene promoters by activators, where it is required for transcription. The TREX-2 complex functions in docking export-competent ribonucleoprotein particles (mRNPs) to the nuclear entrance of the nuclear pore complex (nuclear basket). TREX-2 participates in mRNA export and accurate chromatin positioning in the nucleus by tethering genes to the nuclear periphery. In Taeniopygia guttata (Zebra finch), this protein is Transcription and mRNA export factor ENY2.